The chain runs to 558 residues: T-complex protein 1 subunit gamma (558 aa).

The cysteines at positions 381 and 387 are disulfide-linked.

This sequence belongs to the TCP-1 chaperonin family. As to quaternary structure, heterooligomeric complex of about 850 to 900 kDa that forms two stacked rings, 12 to 16 nm in diameter.

The protein resides in the cytoplasm. Molecular chaperone; assists the folding of proteins upon ATP hydrolysis. Known to play a role, in vitro, in the folding of actin and tubulin. The chain is T-complex protein 1 subunit gamma from Thalassiosira weissflogii (Marine diatom).